The sequence spans 685 residues: DNA topoisomerase 4 subunit B (685 aa).

A compositionally biased stretch (basic and acidic residues) spans 389–400; that stretch reads EAARKAREESRN. The disordered stretch occupies residues 389 to 427; sequence EAARKAREESRNGKKRKKGESLLSGKLTPAQSRNPKKNE. A Toprim domain is found at 426–540; it reads NELYLVEGDS…AGKVYIALPP (115 aa). Residues glutamate 432, aspartate 505, and aspartate 507 each contribute to the Mg(2+) site. Composition is skewed to acidic residues over residues 644–654 and 673–685; these read GSILDRSEEDT and QTDD…FDIE. The segment at 644 to 685 is disordered; it reads GSILDRSEEDTSAPTGESLLDAEKTKEAEQTDDTEISLFDIE.

This sequence belongs to the type II topoisomerase family. ParE type 1 subfamily. Heterotetramer composed of ParC and ParE. It depends on Mg(2+) as a cofactor. Mn(2+) is required as a cofactor. Requires Ca(2+) as cofactor.

The enzyme catalyses ATP-dependent breakage, passage and rejoining of double-stranded DNA.. Its activity is regulated as follows. Pyrrolopyrimidines inhibit both GyrB and its paralog in topoisomerase IV (parE). In terms of biological role, topoisomerase IV is essential for chromosome segregation. It relaxes supercoiled DNA. Performs the decatenation events required during the replication of a circular DNA molecule. This chain is DNA topoisomerase 4 subunit B, found in Enterococcus faecalis (strain ATCC 700802 / V583).